The chain runs to 112 residues: U15-hexatoxin-Hi1a (112 aa).

The N-terminal stretch at 1–18 is a signal peptide; sequence MNTLIAFAVLLLLSTTLG. The propeptide occupies 19 to 73; sequence DTDDKVSHEEIQERKELSGISEELLLQQLEAVEAALMEKERLEEMEEDGNSREKR. Disulfide bonds link cysteine 74–cysteine 88, cysteine 81–cysteine 93, and cysteine 87–cysteine 107.

Belongs to the neurotoxin 14 (magi-1) family. 08 (Ltx-4) subfamily. Expressed by the venom gland.

It is found in the secreted. Its function is as follows. Probable ion channel inhibitor. The sequence is that of U15-hexatoxin-Hi1a from Hadronyche infensa (Fraser island funnel-web spider).